The sequence spans 396 residues: ATP-dependent RNA helicase eIF4A (396 aa).

The Q motif motif lies at 22 to 50 (YSFDDLKLKEELLRGIFGYGFVEPSAIQQ). Residues 53–223 (ILPIIEGKDV…SKFMKDPVRI (171 aa)) enclose the Helicase ATP-binding domain. ATP is bound at residue 66-73 (AQSGTGKT). Positions 171 to 174 (DEAD) match the DEAD box motif. One can recognise a Helicase C-terminal domain in the interval 234–395 (GIGQYYVNVE…ELPSSISELF (162 aa)).

This sequence belongs to the DEAD box helicase family. eIF4A subfamily. Component of the eIF4F complex, which composition varies with external and internal environmental conditions. It is composed of at least eIF4A, eIF4E and eIF4G.

It is found in the cytoplasm. The catalysed reaction is ATP + H2O = ADP + phosphate + H(+). In terms of biological role, ATP-dependent RNA helicase which is a subunit of the eIF4F complex involved in cap recognition and is required for mRNA binding to ribosome. In the current model of translation initiation, eIF4A unwinds RNA secondary structures in the 5'-UTR of mRNAs which is necessary to allow efficient binding of the small ribosomal subunit, and subsequent scanning for the initiator codon. The sequence is that of ATP-dependent RNA helicase eIF4A (TIF1) from Kluyveromyces lactis (strain ATCC 8585 / CBS 2359 / DSM 70799 / NBRC 1267 / NRRL Y-1140 / WM37) (Yeast).